A 43-amino-acid chain; its full sequence is Protein PsbN (43 aa).

Residues 7-27 (LSIGIAVVVIAVTGFSIYTAF) traverse the membrane as a helical segment.

Belongs to the PsbN family.

It localises to the cellular thylakoid membrane. In terms of biological role, may play a role in photosystem I and II biogenesis. The polypeptide is Protein PsbN (Picosynechococcus sp. (strain ATCC 27264 / PCC 7002 / PR-6) (Agmenellum quadruplicatum)).